Reading from the N-terminus, the 33-residue chain is Putative makorin-5 (33 aa).

The chain is Putative makorin-5 (MKRN9P) from Homo sapiens (Human).